A 183-amino-acid chain; its full sequence is Ras-related protein Rap-2a (183 aa).

10-17 (GSGGVGKS) serves as a coordination point for GTP. The Effector region signature appears at 32–40 (YDPTIEDFY). GTP contacts are provided by residues 57-61 (DTAGT) and 116-119 (NKVD). S-palmitoyl cysteine attachment occurs at residues cysteine 176 and cysteine 177. Cysteine 180 is subject to Cysteine methyl ester. Residue cysteine 180 is the site of S-farnesyl cysteine attachment. The propeptide at 181 to 183 (VIL) is removed in mature form.

The protein belongs to the small GTPase superfamily. Ras family. Interacts (GTP-bound form) with RUNDC3A. Interacts with PLCE1. Interacts with ARHGAP29, SGSM1, SGSM2 and SGSM3. Interacts (GTP-bound form preferentially) with TNIK (via the CNH domain); the interaction is direct and recruits RAP2A to the E3 ubiquitin ligase NEDD4. Interacts with MINK1. Interacts (GTP-bound form preferentially) with MAP4K4. Interacts with cytoskeletal actin. Interacts with RGS14; the interaction is GTP-dependent. Ubiquitinated; undergoes 'Lys-63' monoubiquitination and diubiquitination by NEDD4. Multiple lysine residues are probably modified. Ubiquitination requires TNIK, prevents interaction with effectors and inactivates RAP2A. Ubiquitination by the ECS(RAB40B) complex leads to RAP2A localization to lamellipodia plasma membrane, activation, and regulation of sorting at early endosomes for recycling to the lamellipodia plasma membrane. In terms of processing, palmitoylated. Palmitoylation is required for association with recycling endosome membranes and activation of TNIK.

The protein resides in the midbody. Its subcellular location is the cell projection. The protein localises to the lamellipodium membrane. It localises to the golgi apparatus. It is found in the recycling endosome membrane. The protein resides in the lysosome. The enzyme catalyses GTP + H2O = GDP + phosphate + H(+). With respect to regulation, activated by the guanine nucleotide-exchange factors RAPGEF3 and RAPGEF4 in a cAMP-dependent manner. Nucleotide exchange is also specifically stimulated by RAPGEF5, RASGEF1A and RASGEF1B. Functionally, small GTP-binding protein which cycles between a GDP-bound inactive and a GTP-bound active form. In its active form interacts with and regulates several effectors including MAP4K4, MINK1 and TNIK. Part of a signaling complex composed of NEDD4, RAP2A and TNIK which regulates neuronal dendrite extension and arborization during development. More generally, it is part of several signaling cascades and may regulate cytoskeletal rearrangements, cell migration, cell adhesion and cell spreading. The chain is Ras-related protein Rap-2a (RAP2A) from Sus scrofa (Pig).